Consider the following 203-residue polypeptide: RNA pyrophosphohydrolase (203 aa).

Residues 6–149 enclose the Nudix hydrolase domain; it reads GFRPNVGIIL…KRNVYQMALT (144 aa). The Nudix box signature appears at 38 to 59; the sequence is GGIKHGESPEQAMFRELHEEVG. Positions 170 to 203 are disordered; it reads RAHRRDEGSEHNDHLDPTGPHDAGASVSEPKQAE. Residues 173–185 are compositionally biased toward basic and acidic residues; it reads RRDEGSEHNDHLD.

The protein belongs to the Nudix hydrolase family. RppH subfamily. It depends on a divalent metal cation as a cofactor.

Functionally, accelerates the degradation of transcripts by removing pyrophosphate from the 5'-end of triphosphorylated RNA, leading to a more labile monophosphorylated state that can stimulate subsequent ribonuclease cleavage. The protein is RNA pyrophosphohydrolase of Leptothrix cholodnii (strain ATCC 51168 / LMG 8142 / SP-6) (Leptothrix discophora (strain SP-6)).